The chain runs to 277 residues: Phosphoenolpyruvate synthase regulatory protein (277 aa).

ADP is bound at residue Gly-157 to Thr-164.

It belongs to the pyruvate, phosphate/water dikinase regulatory protein family. PSRP subfamily.

It catalyses the reaction [pyruvate, water dikinase] + ADP = [pyruvate, water dikinase]-phosphate + AMP + H(+). It carries out the reaction [pyruvate, water dikinase]-phosphate + phosphate + H(+) = [pyruvate, water dikinase] + diphosphate. In terms of biological role, bifunctional serine/threonine kinase and phosphorylase involved in the regulation of the phosphoenolpyruvate synthase (PEPS) by catalyzing its phosphorylation/dephosphorylation. The chain is Phosphoenolpyruvate synthase regulatory protein from Escherichia coli O17:K52:H18 (strain UMN026 / ExPEC).